A 280-amino-acid chain; its full sequence is Pantothenate synthetase (280 aa).

Residue 30–37 coordinates ATP; it reads MGYLHEGH. Histidine 37 serves as the catalytic Proton donor. A (R)-pantoate-binding site is contributed by glutamine 61. Residue glutamine 61 coordinates beta-alanine. 147–150 is a binding site for ATP; the sequence is GQKD. Glutamine 153 serves as a coordination point for (R)-pantoate. ATP-binding positions include valine 176 and 184-187; that span reads MSSR.

Belongs to the pantothenate synthetase family. In terms of assembly, homodimer.

It localises to the cytoplasm. It carries out the reaction (R)-pantoate + beta-alanine + ATP = (R)-pantothenate + AMP + diphosphate + H(+). It functions in the pathway cofactor biosynthesis; (R)-pantothenate biosynthesis; (R)-pantothenate from (R)-pantoate and beta-alanine: step 1/1. Catalyzes the condensation of pantoate with beta-alanine in an ATP-dependent reaction via a pantoyl-adenylate intermediate. In Thermotoga neapolitana, this protein is Pantothenate synthetase.